We begin with the raw amino-acid sequence, 201 residues long: 3-isopropylmalate dehydratase small subunit (201 aa).

This sequence belongs to the LeuD family. LeuD type 1 subfamily. Heterodimer of LeuC and LeuD.

It catalyses the reaction (2R,3S)-3-isopropylmalate = (2S)-2-isopropylmalate. It functions in the pathway amino-acid biosynthesis; L-leucine biosynthesis; L-leucine from 3-methyl-2-oxobutanoate: step 2/4. Its function is as follows. Catalyzes the isomerization between 2-isopropylmalate and 3-isopropylmalate, via the formation of 2-isopropylmaleate. This Dinoroseobacter shibae (strain DSM 16493 / NCIMB 14021 / DFL 12) protein is 3-isopropylmalate dehydratase small subunit.